Here is a 239-residue protein sequence, read N- to C-terminus: Putative ankyrin repeat protein RBE_0489 (239 aa).

ANK repeat units lie at residues 23 to 52 (ISSR…SPNA), 80 to 109 (GIDT…FINA), and 113 to 143 (FGFT…SLTL).

The protein is Putative ankyrin repeat protein RBE_0489 of Rickettsia bellii (strain RML369-C).